The sequence spans 483 residues: Glutamate--tRNA ligase (483 aa).

Residues 11 to 21 (PSPTGHLHIGN) carry the 'HIGH' region motif. Residues 252–256 (KLSKR) carry the 'KMSKS' region motif. Lysine 255 provides a ligand contact to ATP.

It belongs to the class-I aminoacyl-tRNA synthetase family. Glutamate--tRNA ligase type 1 subfamily. In terms of assembly, monomer.

The protein resides in the cytoplasm. The enzyme catalyses tRNA(Glu) + L-glutamate + ATP = L-glutamyl-tRNA(Glu) + AMP + diphosphate. Catalyzes the attachment of glutamate to tRNA(Glu) in a two-step reaction: glutamate is first activated by ATP to form Glu-AMP and then transferred to the acceptor end of tRNA(Glu). This chain is Glutamate--tRNA ligase, found in Bacillus velezensis (strain DSM 23117 / BGSC 10A6 / LMG 26770 / FZB42) (Bacillus amyloliquefaciens subsp. plantarum).